A 492-amino-acid chain; its full sequence is 5-taurinomethyluridine-[tRNA] synthase subunit GTPB3, mitochondrial (492 aa).

A mitochondrion-targeting transit peptide spans 1–20 (MWRGLWTLAAQAARGPRRLC). Arg52, Glu112, and Lys152 together coordinate 5,10-methylenetetrahydrofolate. The 168-residue stretch at 249-416 (GVHVVVTGPP…LLEALRKELA (168 aa)) folds into the TrmE-type G domain. GTP contacts are provided by residues 256–263 (GPPNAGKS), 282–286 (GTTRD), 303–306 (DTAG), 374–377 (NKSD), and 397–399 (SCL). K(+) is bound at residue Asn259. Residues Ser263 and Thr284 each contribute to the Mg(2+) site. A 5,10-methylenetetrahydrofolate-binding site is contributed by Lys492.

Belongs to the TRAFAC class TrmE-Era-EngA-EngB-Septin-like GTPase superfamily. TrmE GTPase family. As to quaternary structure, homodimer; forms a dimer in the presence of potassium. Interacts with MTO1; forms the GTPBP3-MTO1 complex composed of homodimers of GTPBP3 and MTO1. Homodimer, forms homodimer in vivo. K(+) serves as cofactor. As to expression, ubiquitously expressed.

It localises to the mitochondrion. Its subcellular location is the cytoplasm. The enzyme catalyses GTP + H2O = GDP + phosphate + H(+). Its function is as follows. GTPase component of the GTPBP3-MTO1 complex that catalyzes the 5-taurinomethyluridine (taum(5)U) modification at the 34th wobble position (U34) of mitochondrial tRNAs (mt-tRNAs), which plays a role in mt-tRNA decoding and mitochondrial translation. Taum(5)U formation on mammalian mt-tRNA requires the presence of both GTPBP3-mediated GTPase activity and MTO1 catalytic activity. This Homo sapiens (Human) protein is 5-taurinomethyluridine-[tRNA] synthase subunit GTPB3, mitochondrial.